The following is a 967-amino-acid chain: RNA polymerase-associated protein RapA (967 aa).

Residues 163-332 (EVGRRHAPRV…FARLRLLDPD (170 aa)) form the Helicase ATP-binding domain. Residue 176 to 183 (DEVGLGKT) participates in ATP binding. The DEAH box signature appears at 278–281 (DEAH). Residues 491-639 (RVDWLIDFLK…LCAFELTCPG (149 aa)) enclose the Helicase C-terminal domain.

It belongs to the SNF2/RAD54 helicase family. RapA subfamily. Interacts with the RNAP. Has a higher affinity for the core RNAP than for the holoenzyme. Its ATPase activity is stimulated by binding to RNAP.

Its function is as follows. Transcription regulator that activates transcription by stimulating RNA polymerase (RNAP) recycling in case of stress conditions such as supercoiled DNA or high salt concentrations. Probably acts by releasing the RNAP, when it is trapped or immobilized on tightly supercoiled DNA. Does not activate transcription on linear DNA. Probably not involved in DNA repair. The sequence is that of RNA polymerase-associated protein RapA from Shewanella amazonensis (strain ATCC BAA-1098 / SB2B).